The chain runs to 244 residues: Triosephosphate isomerase (244 aa).

8-10 provides a ligand contact to substrate; sequence NWK. The active-site Electrophile is histidine 93. Catalysis depends on glutamate 161, which acts as the Proton acceptor. Residues glycine 167, serine 206, and 227 to 228 contribute to the substrate site; that span reads GG.

The protein belongs to the triosephosphate isomerase family. In terms of assembly, homodimer.

It localises to the cytoplasm. The enzyme catalyses D-glyceraldehyde 3-phosphate = dihydroxyacetone phosphate. The protein operates within carbohydrate biosynthesis; gluconeogenesis. It functions in the pathway carbohydrate degradation; glycolysis; D-glyceraldehyde 3-phosphate from glycerone phosphate: step 1/1. Functionally, involved in the gluconeogenesis. Catalyzes stereospecifically the conversion of dihydroxyacetone phosphate (DHAP) to D-glyceraldehyde-3-phosphate (G3P). This chain is Triosephosphate isomerase, found in Deinococcus radiodurans (strain ATCC 13939 / DSM 20539 / JCM 16871 / CCUG 27074 / LMG 4051 / NBRC 15346 / NCIMB 9279 / VKM B-1422 / R1).